A 510-amino-acid chain; its full sequence is uncharacterized protein (510 aa).

A signal peptide spans 1 to 19 (MLILLILYFLFLQLHIFDS). A helical membrane pass occupies residues 28–48 (IYIHYAICKFIFLLEIYKLIA).

Its subcellular location is the host membrane. This is an uncharacterized protein from Sulfolobus islandicus rod-shaped virus 1 (SIRV-1).